We begin with the raw amino-acid sequence, 420 residues long: Subtilisin-like protease 7 (420 aa).

Residues Met-1–Gly-20 form the signal peptide. Residues Ala-21 to Asn-119 constitute a propeptide that is removed on maturation. One can recognise an Inhibitor I9 domain in the interval Lys-36–Ile-118. In terms of domain architecture, Peptidase S8 spans Ser-129 to Gln-413. Catalysis depends on charge relay system residues Asp-161 and His-192. N-linked (GlcNAc...) asparagine glycans are attached at residues Asn-222 and Asn-252. The Charge relay system role is filled by Ser-346. A glycan (N-linked (GlcNAc...) asparagine) is linked at Asn-396.

The protein belongs to the peptidase S8 family.

It localises to the secreted. Secreted subtilisin-like serine protease with keratinolytic activity that contributes to pathogenicity. The sequence is that of Subtilisin-like protease 7 (SUB7) from Arthroderma benhamiae (strain ATCC MYA-4681 / CBS 112371) (Trichophyton mentagrophytes).